We begin with the raw amino-acid sequence, 146 residues long: MKHVDIFTDGACSGNPGPGGWGAVLRYGETEKELSGGEADTTNNRMELLAAISALNALKSPCEVDLYTDSAYVKDGITKWIFGWKKKGWKTADNKPVKNVELWQALEAAQERHKVTLHWVKGHAGHPENERADELARKGMEPFKRR.

An RNase H type-1 domain is found at 1-141 (MKHVDIFTDG…ADELARKGME (141 aa)). 4 residues coordinate Mg(2+): Asp9, Glu47, Asp69, and Asp133. Residues 123–146 (HAGHPENERADELARKGMEPFKRR) form a disordered region. The segment covering 125–146 (GHPENERADELARKGMEPFKRR) has biased composition (basic and acidic residues).

It belongs to the RNase H family. Monomer. Mg(2+) is required as a cofactor.

The protein resides in the cytoplasm. The catalysed reaction is Endonucleolytic cleavage to 5'-phosphomonoester.. In terms of biological role, endonuclease that specifically degrades the RNA of RNA-DNA hybrids. The chain is Ribonuclease H from Agrobacterium fabrum (strain C58 / ATCC 33970) (Agrobacterium tumefaciens (strain C58)).